The following is a 299-amino-acid chain: UDP-N-acetylenolpyruvoylglucosamine reductase (299 aa).

The FAD-binding PCMH-type domain occupies 27–192 (KSGGAADWLF…VGATFRGRPG (166 aa)). The active site involves Arg-172. Positions 206–225 (ASREASQPLRSRTGGSTFKN) are disordered. The segment covering 208-224 (REASQPLRSRTGGSTFK) has biased composition (polar residues). The active-site Proton donor is Ser-221. Residue Glu-291 is part of the active site.

Belongs to the MurB family. It depends on FAD as a cofactor.

It is found in the cytoplasm. It carries out the reaction UDP-N-acetyl-alpha-D-muramate + NADP(+) = UDP-N-acetyl-3-O-(1-carboxyvinyl)-alpha-D-glucosamine + NADPH + H(+). The protein operates within cell wall biogenesis; peptidoglycan biosynthesis. Its function is as follows. Cell wall formation. The protein is UDP-N-acetylenolpyruvoylglucosamine reductase of Sphingopyxis alaskensis (strain DSM 13593 / LMG 18877 / RB2256) (Sphingomonas alaskensis).